Here is a 942-residue protein sequence, read N- to C-terminus: Chitin synthase 2 (942 aa).

Basic and acidic residues predominate over residues 1–13 (MAYHYSHDSDRRQ). The segment at 1–132 (MAYHYSHDSD…PSHTDYSDED (132 aa)) is disordered. Positions 18–33 (YNYPSNYSNPSQYSIP) are enriched in low complexity. Residue Asn-23 is glycosylated (N-linked (GlcNAc...) asparagine). Positions 71-80 (PQPTASSMTS) are enriched in polar residues. Asn-587 carries an N-linked (GlcNAc...) asparagine glycan. 4 helical membrane passes run 590–610 (IFAATYAMVCFWRIWTSGHGI), 625–645 (FNLLFNWLSVSSFYLAFFFLI), 663–683 (IFQVFNKVYIALIFVVLVCSL), and 696–716 (FCIFMFAVCQGILLYCAGWTV). A glycan (N-linked (GlcNAc...) asparagine) is linked at Asn-736. Transmembrane regions (helical) follow at residues 739 to 759 (FVQLALSLMATYGLYLISSLL) and 770 to 790 (FVQYLLLLPSYVNILLIYAMC). An N-linked (GlcNAc...) asparagine glycan is attached at Asn-803. 2 helical membrane passes run 873-893 (VVLLFLGSNMLIILLFTSSTF) and 916-936 (IFYAVLGLSALRFAGCLLYLI).

This sequence belongs to the chitin synthase family. Class III subfamily.

The protein resides in the cell membrane. The catalysed reaction is [(1-&gt;4)-N-acetyl-beta-D-glucosaminyl](n) + UDP-N-acetyl-alpha-D-glucosamine = [(1-&gt;4)-N-acetyl-beta-D-glucosaminyl](n+1) + UDP + H(+). Functionally, polymerizes chitin, a structural polymer of the cell wall and septum, by transferring the sugar moiety of UDP-GlcNAc to the non-reducing end of the growing chitin polymer. In Cryptococcus neoformans var. grubii serotype A (strain H99 / ATCC 208821 / CBS 10515 / FGSC 9487) (Filobasidiella neoformans var. grubii), this protein is Chitin synthase 2.